Reading from the N-terminus, the 565-residue chain is Protein NRT1/ PTR FAMILY 5.15 (565 aa).

The next 2 helical transmembrane spans lie at 49-67 (FAYF…GPLG) and 80-100 (WSGT…AYLG). Threonine 104 is subject to Phosphothreonine. 10 helical membrane passes run 110-130 (LIYI…IMGL), 142-162 (SIWV…GQGG), 189-209 (FFNW…IVVA), 217-237 (WAFG…IFLL), 331-351 (IPIW…ITFF), 368-388 (IPAA…VPLY), 409-429 (LQRI…AALV), 454-474 (IWWF…SMVG), 490-510 (IGLS…GFLI), and 534-554 (YFYW…LFIS).

The protein belongs to the major facilitator superfamily. Proton-dependent oligopeptide transporter (POT/PTR) (TC 2.A.17) family. As to expression, expressed in shoots, roots and leaves.

Its subcellular location is the membrane. In Arabidopsis thaliana (Mouse-ear cress), this protein is Protein NRT1/ PTR FAMILY 5.15 (NPF5.15).